The primary structure comprises 187 residues: Adenylate kinase (187 aa).

ATP is bound at residue 10–15 (GSGKGT). The segment at 30–59 (STGDLLRAEVAAGSPLGLKAKEVMARGDLV) is NMP. AMP is bound by residues threonine 31, arginine 36, 57–59 (DLV), 85–88 (GYPR), and glutamine 92. The tract at residues 126 to 136 (GRAKAEGREDD) is LID. Residue arginine 127 participates in ATP binding. Residues arginine 133 and arginine 144 each contribute to the AMP site. Glycine 172 is a binding site for ATP.

Belongs to the adenylate kinase family. Monomer.

It localises to the cytoplasm. It carries out the reaction AMP + ATP = 2 ADP. Its pathway is purine metabolism; AMP biosynthesis via salvage pathway; AMP from ADP: step 1/1. Functionally, catalyzes the reversible transfer of the terminal phosphate group between ATP and AMP. Plays an important role in cellular energy homeostasis and in adenine nucleotide metabolism. The polypeptide is Adenylate kinase (Xanthomonas campestris pv. campestris (strain 8004)).